Reading from the N-terminus, the 238-residue chain is Sugar fermentation stimulation protein homolog (238 aa).

The protein belongs to the SfsA family.

The polypeptide is Sugar fermentation stimulation protein homolog (Vibrio parahaemolyticus serotype O3:K6 (strain RIMD 2210633)).